A 155-amino-acid chain; its full sequence is MSEKTIYSDLKQLGSNASIPQNPEDAILERVANPQAGTPYCVRFTAPEFTSLCPMTGQPDFAHLVIDYVPGQWLVESKSLKLFLFSFRNHGAFHEDCTVTIGKRLVELLEPEWLRIGGYWYPRGGIPIDVFFQTGAAPQNVWIPEQGVPNYRGRG.

The active-site Thioimide intermediate is the Cys53. The active-site Proton donor is the Asp60. Residues 75-77 (VES) and 94-95 (HE) contribute to the substrate site.

The protein belongs to the GTP cyclohydrolase I family. QueF type 1 subfamily.

The protein resides in the cytoplasm. The catalysed reaction is 7-aminomethyl-7-carbaguanine + 2 NADP(+) = 7-cyano-7-deazaguanine + 2 NADPH + 3 H(+). It functions in the pathway tRNA modification; tRNA-queuosine biosynthesis. In terms of biological role, catalyzes the NADPH-dependent reduction of 7-cyano-7-deazaguanine (preQ0) to 7-aminomethyl-7-deazaguanine (preQ1). This chain is NADPH-dependent 7-cyano-7-deazaguanine reductase, found in Brucella anthropi (strain ATCC 49188 / DSM 6882 / CCUG 24695 / JCM 21032 / LMG 3331 / NBRC 15819 / NCTC 12168 / Alc 37) (Ochrobactrum anthropi).